Consider the following 228-residue polypeptide: Cytidylate kinase (228 aa).

12–20 (GPSGSGKGT) is a binding site for ATP.

The protein belongs to the cytidylate kinase family. Type 1 subfamily.

It is found in the cytoplasm. It catalyses the reaction CMP + ATP = CDP + ADP. The catalysed reaction is dCMP + ATP = dCDP + ADP. The polypeptide is Cytidylate kinase (Pseudomonas putida (strain ATCC 47054 / DSM 6125 / CFBP 8728 / NCIMB 11950 / KT2440)).